The sequence spans 278 residues: Poly(3-hydroxyoctanoate) depolymerase (278 aa).

A signal peptide spans 1–33 (MPLRTLLCGLLLAVCLGQHALAASRCSERPRTL).

The protein resides in the secreted. The enzyme catalyses Hydrolyzes the polyester poly{oxycarbonyl[(R)-2-pentylethylene]} to oligomers.. Functionally, hydrolysis of poly(3-hydroxyoctanoic acid). This Pseudomonas fluorescens protein is Poly(3-hydroxyoctanoate) depolymerase (phaZ).